The following is a 158-amino-acid chain: AP-1 complex subunit sigma-1A (158 aa).

Ser147 is subject to Phosphoserine.

Belongs to the adaptor complexes small subunit family. As to quaternary structure, adaptor protein complex 1 (AP-1) is a heterotetramer composed of two large adaptins (gamma-type subunit AP1G1 and beta-type subunit AP1B1), a medium adaptin (mu-type subunit AP1M1 or AP1M2) and a small adaptin (sigma-type subunit AP1S1 or AP1S2 or AP1S3). Widely expressed.

It is found in the golgi apparatus. The protein resides in the cytoplasmic vesicle membrane. The protein localises to the membrane. It localises to the clathrin-coated pit. Subunit of clathrin-associated adaptor protein complex 1 that plays a role in protein sorting in the late-Golgi/trans-Golgi network (TGN) and/or endosomes. The AP complexes mediate both the recruitment of clathrin to membranes and the recognition of sorting signals within the cytosolic tails of transmembrane cargo molecules. In Homo sapiens (Human), this protein is AP-1 complex subunit sigma-1A (AP1S1).